Here is a 139-residue protein sequence, read N- to C-terminus: MAIERTLSILKPDAVKNNITGNINSYIEQSGLKITAQKMMLLTKKQAELFYEIHKDRPFFGELVEFMTSGSVVVQVLVGENAVSKYRQIMGATDPKQADKGTIRGDFADDISENRVHGSDSLENARKEIAFFFAECELV.

The ATP site is built by lysine 11, phenylalanine 59, arginine 87, threonine 93, arginine 104, and asparagine 114. Residue histidine 117 is the Pros-phosphohistidine intermediate of the active site.

It belongs to the NDK family. In terms of assembly, homotetramer. Requires Mg(2+) as cofactor.

The protein resides in the cytoplasm. It carries out the reaction a 2'-deoxyribonucleoside 5'-diphosphate + ATP = a 2'-deoxyribonucleoside 5'-triphosphate + ADP. The enzyme catalyses a ribonucleoside 5'-diphosphate + ATP = a ribonucleoside 5'-triphosphate + ADP. Its function is as follows. Major role in the synthesis of nucleoside triphosphates other than ATP. The ATP gamma phosphate is transferred to the NDP beta phosphate via a ping-pong mechanism, using a phosphorylated active-site intermediate. This chain is Nucleoside diphosphate kinase, found in Wolbachia pipientis wMel.